Here is a 403-residue protein sequence, read N- to C-terminus: Peroxisomal membrane protein PEX13 (403 aa).

A compositionally biased stretch (pro residues) spans 1–11; sequence MASQPPPPPKP. The interval 1 to 69 is disordered; that stretch reads MASQPPPPPK…SQQTGGNNVN (69 aa). The Peroxisomal matrix segment spans residues 1-134; the sequence is MASQPPPPPK…SSRGAFQSIE (134 aa). Positions 59 to 69 are enriched in polar residues; that stretch reads PSQQTGGNNVN. Residues 135 to 155 traverse the membrane as a helical segment; that stretch reads SIVHAFASVSMMMDATFSAVY. The tract at residues 145–233 is targeting to peroxisomes; the sequence is MMMDATFSAV…EDQANNSAKS (89 aa). The Cytoplasmic segment spans residues 156–174; the sequence is NSFRAVLDVANHFSRLKIH. Residues 175–192 form a helical membrane-spanning segment; the sequence is FTKVFSAFALVRTIRYLY. The interval 175–196 is interaction with PEX19; it reads FTKVFSAFALVRTIRYLYRRLQ. Residues 193–233 are Peroxisomal matrix-facing; that stretch reads RRLQWMMGLRRGSENEDLWAESEGTVACLGAEDQANNSAKS. The helical transmembrane segment at 234 to 254 threads the bilayer; that stretch reads WPIFLFFAVILGGPYLIWKLL. The Cytoplasmic portion of the chain corresponds to 255–403; it reads STHSDEVTDS…TGKNGDKQDL (149 aa). In terms of domain architecture, SH3 spans 272–336; that stretch reads DDHVVARAEY…PANYVKILGK (65 aa). Disordered regions lie at residues 341–364 and 381–403; these read KTVESSTMPKQQQSFTNPTSVKGV and FVETNKVAGTPDSTGKNGDKQDL. A compositionally biased stretch (polar residues) spans 344–364; sequence ESSTMPKQQQSFTNPTSVKGV.

This sequence belongs to the peroxin-13 family. In terms of assembly, interacts (via SH3 domain) with PEX14 (via SH3-binding motif); forming the PEX13-PEX14 docking complex. Interacts with PEX19.

The protein resides in the peroxisome membrane. Component of the PEX13-PEX14 docking complex, a translocon channel that specifically mediates the import of peroxisomal cargo proteins bound to PEX5 receptor. The PEX13-PEX14 docking complex forms a large import pore which can be opened to a diameter of about 9 nm. Mechanistically, PEX5 receptor along with cargo proteins associates with the PEX14 subunit of the PEX13-PEX14 docking complex in the cytosol, leading to the insertion of the receptor into the organelle membrane with the concomitant translocation of the cargo into the peroxisome matrix. Involved in the import of PTS1- and PTS2-type containing proteins. In Rattus norvegicus (Rat), this protein is Peroxisomal membrane protein PEX13.